Reading from the N-terminus, the 876-residue chain is GRB2-associated and regulator of MAPK protein 1 (876 aa).

The CABIT stretch occupies residues 12-320 (KDVKWSSVAV…HLVKGESWPE (309 aa)). 2 positions are modified to phosphotyrosine: Tyr-105 and Tyr-453. The disordered stretch occupies residues 496 to 572 (IPGTLGAAVK…SPSPTLSYYS (77 aa)). The interval 498-550 (GTLGAAVKSSDTALPPPPVPPKSEAVREECRLLNAPPVPPRSAKPLSTSPSIP) is necessary for interaction with GRB2. Over residues 558 to 572 (RQQTRSPSPTLSYYS) the composition is skewed to polar residues. Phosphoserine occurs at positions 610 and 614. 2 disordered regions span residues 626–664 (WPNHYSGASESQTRSDFLLDPSRSYSYPRQKTPGTPKRN) and 738–763 (ASETSPLPLKIDGAEEDPKSGSPDLS). 2 stretches are compositionally biased toward polar residues: residues 631-640 (SGASESQTRS) and 648-658 (RSYSYPRQKTP). Residues 811–876 (LSIEEVSKSL…QFINGWRPKI (66 aa)) form the SAM domain.

Belongs to the GAREM family. In terms of assembly, isoform 1 interacts with EGFR. Isoform 1 interacts (via proline-rich domain and phosphorylated at Tyr-105 and Tyr-453) with GRB2 (via SH3 domains); the interaction occurs upon EGF stimulation. Isoform 1 interacts (phosphorylated at Tyr-453) with PTPN11; the interaction increases MAPK/ERK activity and does not affect the GRB2/SOS complex formation. Isoform 2 does not interact with GRB2. In terms of processing, on EGF stimulation, phosphorylated on Tyr-105 and Tyr-453. In terms of tissue distribution, isoform 1 is ubiquitously expressed.

Acts as an adapter protein that plays a role in intracellular signaling cascades triggered either by the cell surface activated epidermal growth factor receptor and/or cytoplasmic protein tyrosine kinases. Promotes activation of the MAPK/ERK signaling pathway. Plays a role in the regulation of cell proliferation. In Homo sapiens (Human), this protein is GRB2-associated and regulator of MAPK protein 1 (GAREM1).